A 526-amino-acid polypeptide reads, in one-letter code: Bifunctional purine biosynthesis protein PurH (526 aa).

The 145-residue stretch at 1 to 145 (MSKAPLALLS…KNHAHVGIVT (145 aa)) folds into the MGS-like domain.

Belongs to the PurH family.

The catalysed reaction is (6R)-10-formyltetrahydrofolate + 5-amino-1-(5-phospho-beta-D-ribosyl)imidazole-4-carboxamide = 5-formamido-1-(5-phospho-D-ribosyl)imidazole-4-carboxamide + (6S)-5,6,7,8-tetrahydrofolate. It carries out the reaction IMP + H2O = 5-formamido-1-(5-phospho-D-ribosyl)imidazole-4-carboxamide. The protein operates within purine metabolism; IMP biosynthesis via de novo pathway; 5-formamido-1-(5-phospho-D-ribosyl)imidazole-4-carboxamide from 5-amino-1-(5-phospho-D-ribosyl)imidazole-4-carboxamide (10-formyl THF route): step 1/1. It functions in the pathway purine metabolism; IMP biosynthesis via de novo pathway; IMP from 5-formamido-1-(5-phospho-D-ribosyl)imidazole-4-carboxamide: step 1/1. This is Bifunctional purine biosynthesis protein PurH from Psychrobacter arcticus (strain DSM 17307 / VKM B-2377 / 273-4).